Consider the following 174-residue polypeptide: Chaperonin-like RBCX protein 1, chloroplastic (174 aa).

The N-terminal 45 residues, 1–45, are a transit peptide targeting the chloroplast; sequence MESSSSLLHHSYLSYLNPKFGKRPLVSYPLMQSSRKCKQTRICSN.

The protein belongs to the RbcX family. Homodimer. Interacts with rbcL, atpB and THI1.

It is found in the plastid. The protein localises to the chloroplast. In terms of biological role, chaperone involved in RuBisCO assembly process. This Arabidopsis thaliana (Mouse-ear cress) protein is Chaperonin-like RBCX protein 1, chloroplastic.